A 220-amino-acid chain; its full sequence is Iron-sulfur cluster repair protein YtfE (220 aa).

It belongs to the RIC family. YtfE subfamily. As to quaternary structure, homodimer.

The protein resides in the cytoplasm. Functionally, di-iron-containing protein involved in the repair of iron-sulfur clusters damaged by oxidative and nitrosative stress conditions. The protein is Iron-sulfur cluster repair protein YtfE of Escherichia coli (strain SMS-3-5 / SECEC).